The sequence spans 259 residues: MNHYPECTCQESLCETVRGFSAHHPDSVIYQTSLMSALLSGVYEGSTTIADLLTHGDFGLGTFNELDGELIAFSSEVYQLRADGSARKARADQKTPFAVMTWFRPQYRKTFDHPVSRQQLHDVIDQQIPSDNLFCALHIDGHFRHAHTRTVPRQTPPYRAMTDVLDDQPVFRFNQRKGTLVGFRTPQHMQGLNVAGYHEHFITDDRQGGGHLLDYQLDSGVLTFGEIHKLMIDLPADSAFLQADLHPDNLDAAIRAVEN.

Belongs to the alpha-acetolactate decarboxylase family.

The enzyme catalyses (2S)-2-acetolactate + H(+) = (R)-acetoin + CO2. It participates in polyol metabolism; (R,R)-butane-2,3-diol biosynthesis; (R,R)-butane-2,3-diol from pyruvate: step 2/3. Functionally, converts acetolactate into acetoin, which can be excreted by the cells. This may be a mechanism for controlling the internal pH of cells in the stationary stage. The chain is Alpha-acetolactate decarboxylase (budA) from Raoultella terrigena (Klebsiella terrigena).